Here is a 305-residue protein sequence, read N- to C-terminus: Ribosomal RNA small subunit methyltransferase H (305 aa).

Residues 30-32 (GGH), Asp49, Phe74, Asp96, and Gln103 each bind S-adenosyl-L-methionine.

The protein belongs to the methyltransferase superfamily. RsmH family.

The protein resides in the cytoplasm. The catalysed reaction is cytidine(1402) in 16S rRNA + S-adenosyl-L-methionine = N(4)-methylcytidine(1402) in 16S rRNA + S-adenosyl-L-homocysteine + H(+). Specifically methylates the N4 position of cytidine in position 1402 (C1402) of 16S rRNA. The chain is Ribosomal RNA small subunit methyltransferase H from Francisella tularensis subsp. holarctica (strain LVS).